Here is a 302-residue protein sequence, read N- to C-terminus: Probable lipid kinase YegS-like (302 aa).

The 129-residue stretch at 1 to 129 (MDKDKVLLVL…IDLGAVNGKL (129 aa)) folds into the DAGKc domain. Residues threonine 39, 65 to 71 (GDGTLRE), and threonine 92 each bind ATP. Mg(2+) contacts are provided by arginine 210, aspartate 213, and leucine 215. The Proton acceptor role is filled by glutamate 268.

It belongs to the diacylglycerol/lipid kinase family. YegS lipid kinase subfamily. Mg(2+) is required as a cofactor. Ca(2+) serves as cofactor.

The protein resides in the cytoplasm. Probably phosphorylates lipids; the in vivo substrate is unknown. The chain is Probable lipid kinase YegS-like from Pseudomonas aeruginosa (strain UCBPP-PA14).